The sequence spans 173 residues: UPF0102 protein Psyc_1908 (173 aa).

It belongs to the UPF0102 family.

In Psychrobacter arcticus (strain DSM 17307 / VKM B-2377 / 273-4), this protein is UPF0102 protein Psyc_1908.